The primary structure comprises 119 residues: Protein phosphatase EYA4 (119 aa).

It belongs to the HAD-like hydrolase superfamily. EYA family. The cofactor is Mg(2+).

The protein localises to the cytoplasm. Its subcellular location is the nucleus. It carries out the reaction O-phospho-L-tyrosyl-[protein] + H2O = L-tyrosyl-[protein] + phosphate. Functionally, tyrosine phosphatase that specifically dephosphorylates 'Tyr-142' of histone H2AX (H2AXY142ph). 'Tyr-142' phosphorylation of histone H2AX plays a central role in DNA repair and acts as a mark that distinguishes between apoptotic and repair responses to genotoxic stress. Promotes efficient DNA repair by dephosphorylating H2AX, promoting the recruitment of DNA repair complexes containing MDC1. Its function as histone phosphatase probably explains its role in transcription regulation during organogenesis. May be involved in development of the eye. The polypeptide is Protein phosphatase EYA4 (EYA4) (Gallus gallus (Chicken)).